Reading from the N-terminus, the 417-residue chain is D-amino acid dehydrogenase (417 aa).

3-17 (AVVLGSGVVGLMSAW) provides a ligand contact to FAD.

It belongs to the DadA oxidoreductase family. Requires FAD as cofactor.

The catalysed reaction is a D-alpha-amino acid + A + H2O = a 2-oxocarboxylate + AH2 + NH4(+). Oxidative deamination of D-amino acids. This chain is D-amino acid dehydrogenase, found in Vibrio vulnificus (strain CMCP6).